A 328-amino-acid chain; its full sequence is uncharacterized protein (328 aa).

Positions L37 to I179 constitute an SIS domain. G52–G57 is a binding site for ATP. CBS domains follow at residues P207–I264 and M273–L328.

It belongs to the SIS family. GutQ/KpsF subfamily.

This is an uncharacterized protein from Chlamydia trachomatis serovar D (strain ATCC VR-885 / DSM 19411 / UW-3/Cx).